The following is a 537-amino-acid chain: ATP synthase subunit beta (537 aa).

The segment at 1 to 61 (MAKAATSKKE…SSPQKGGKKG (61 aa)) is disordered. The segment covering 7-18 (SKKEASKVEAKK) has biased composition (basic and acidic residues). Residues 44–55 (NSPSRTGSSSPQ) show a composition bias toward polar residues. 209 to 216 (GGAGVGKT) serves as a coordination point for ATP.

This sequence belongs to the ATPase alpha/beta chains family. In terms of assembly, F-type ATPases have 2 components, CF(1) - the catalytic core - and CF(0) - the membrane proton channel. CF(1) has five subunits: alpha(3), beta(3), gamma(1), delta(1), epsilon(1). CF(0) has three main subunits: a(1), b(2) and c(9-12). The alpha and beta chains form an alternating ring which encloses part of the gamma chain. CF(1) is attached to CF(0) by a central stalk formed by the gamma and epsilon chains, while a peripheral stalk is formed by the delta and b chains.

The protein localises to the cell inner membrane. It carries out the reaction ATP + H2O + 4 H(+)(in) = ADP + phosphate + 5 H(+)(out). Functionally, produces ATP from ADP in the presence of a proton gradient across the membrane. The catalytic sites are hosted primarily by the beta subunits. The protein is ATP synthase subunit beta of Bartonella bacilliformis (strain ATCC 35685 / KC583 / Herrer 020/F12,63).